A 540-amino-acid polypeptide reads, in one-letter code: Putative cysteine ligase BshC (540 aa).

Residues 457–477 (EKNRAFIQGQIAFLKERMERE) are a coiled coil.

It belongs to the BshC family.

Involved in bacillithiol (BSH) biosynthesis. May catalyze the last step of the pathway, the addition of cysteine to glucosamine malate (GlcN-Mal) to generate BSH. This chain is Putative cysteine ligase BshC, found in Shouchella clausii (strain KSM-K16) (Alkalihalobacillus clausii).